An 89-amino-acid chain; its full sequence is NAD(P)H-quinone oxidoreductase subunit L (89 aa).

The next 2 helical transmembrane spans lie at 29 to 46 (VLGG…FYWM) and 59 to 79 (LFIY…APFL).

The protein belongs to the complex I NdhL subunit family. NDH-1 can be composed of about 15 different subunits; different subcomplexes with different compositions have been identified which probably have different functions.

Its subcellular location is the cellular thylakoid membrane. The enzyme catalyses a plastoquinone + NADH + (n+1) H(+)(in) = a plastoquinol + NAD(+) + n H(+)(out). The catalysed reaction is a plastoquinone + NADPH + (n+1) H(+)(in) = a plastoquinol + NADP(+) + n H(+)(out). In terms of biological role, NDH-1 shuttles electrons from an unknown electron donor, via FMN and iron-sulfur (Fe-S) centers, to quinones in the respiratory and/or the photosynthetic chain. The immediate electron acceptor for the enzyme in this species is believed to be plastoquinone. Couples the redox reaction to proton translocation, and thus conserves the redox energy in a proton gradient. Cyanobacterial NDH-1 also plays a role in inorganic carbon-concentration. The polypeptide is NAD(P)H-quinone oxidoreductase subunit L (Prochlorococcus marinus (strain NATL1A)).